Reading from the N-terminus, the 962-residue chain is Protease 3 (962 aa).

The N-terminal stretch at 1-23 (MPRSTWFKALLLLVALWAPLSQA) is a signal peptide. His-88 contacts Zn(2+). Glu-91 (proton acceptor) is an active-site residue. Positions 92 and 169 each coordinate Zn(2+).

Belongs to the peptidase M16 family. In terms of assembly, monomer. Zn(2+) is required as a cofactor.

The protein localises to the periplasm. It catalyses the reaction Preferential cleavage of 16-Tyr-|-Leu-17 and 25-Phe-|-Tyr-26 bonds of oxidized insulin B chain. Also acts on other substrates of Mw less than 7 kDa such as insulin and glucagon.. Endopeptidase that degrades small peptides of less than 7 kDa, such as glucagon and insulin. The chain is Protease 3 (ptrA) from Escherichia coli (strain K12).